Reading from the N-terminus, the 87-residue chain is Small polypeptide ROTUNDIFOLIA LIKE 2 (87 aa).

The helical transmembrane segment at 19-35 (LIPHTSHYILQLVYLHL) threads the bilayer. The interval 56–87 (GQMGRLNRAFREKRARFYIFRRCVIMLLRWSD) is required for DVL/RTFL small polypeptide activity.

It belongs to the DVL/RTFL small polypeptides family.

The protein localises to the cell membrane. In terms of biological role, small polypeptide acting as a regulatory molecule which coordinates cellular responses required for differentiation, growth and development, probably by restricting polar cell proliferation in lateral organs. The sequence is that of Small polypeptide ROTUNDIFOLIA LIKE 2 from Oryza sativa subsp. japonica (Rice).